A 130-amino-acid polypeptide reads, in one-letter code: Small ribosomal subunit protein uS9 (130 aa).

The protein belongs to the universal ribosomal protein uS9 family.

This is Small ribosomal subunit protein uS9 from Bacillus anthracis (strain A0248).